A 271-amino-acid chain; its full sequence is N-acetyltransferase ECO1 (271 aa).

The CCHH-type zinc-finger motif lies at 26 to 50; sequence VKCPKCSITYSTNSPSDLVQHKRYH. The region spanning 109 to 271 is the N-acetyltransferase domain; the sequence is VMISPKKANE…SGKLLIPCYI (163 aa).

The protein belongs to the acetyltransferase family. ECO subfamily.

The protein localises to the nucleus. Functionally, probable acetyltransferase required for the establishment of sister chromatid cohesion and couple the processes of cohesion and DNA replication to ensure that only sister chromatids become paired together. In contrast to the structural cohesins, the deposition and establishment factors are required only during S phase. Acts by acetylating the cohesin complex component SMC3. This is N-acetyltransferase ECO1 (ECO1) from Kluyveromyces lactis (strain ATCC 8585 / CBS 2359 / DSM 70799 / NBRC 1267 / NRRL Y-1140 / WM37) (Yeast).